A 223-amino-acid polypeptide reads, in one-letter code: Ras-related protein Rab-37 (223 aa).

Residues 1–13 (MTGTPGAATAGDG) are compositionally biased toward low complexity. A disordered region spans residues 1–22 (MTGTPGAATAGDGEAPERSPPF). An N-acetylthreonine modification is found at threonine 2. Serine 38, glycine 39, valine 40, glycine 41, lysine 42, threonine 43, cysteine 44, and threonine 62 together coordinate GTP. Residue threonine 43 coordinates Mg(2+). 2 short sequence motifs (switch) span residues 52–67 (GAFL…GIDS) and 85–102 (DTAG…YYRD). Mg(2+)-binding residues include threonine 62 and aspartate 85. GTP-binding residues include glycine 88, asparagine 143, lysine 144, aspartate 146, serine 173, alanine 174, and lysine 175. Residues cysteine 219 and cysteine 220 are each lipidated (S-geranylgeranyl cysteine). The residue at position 220 (cysteine 220) is a Cysteine methyl ester. A propeptide spans 221–223 (SFV) (removed in mature form).

The protein belongs to the small GTPase superfamily. Rab family. In terms of assembly, interacts with RIMS1. Interacts (in GDP-bound form) with RPGR, RPGR functions as guanine exchange factor (GEF). Mg(2+) serves as cofactor. Expressed in the retina (at protein level). Specifically expressed in the bone marrow mast cells.

The protein localises to the cytoplasmic vesicle. Its subcellular location is the cell projection. It is found in the cilium. The enzyme catalyses GTP + H2O = GDP + phosphate + H(+). With respect to regulation, regulated by guanine nucleotide exchange factors (GEFs) including RPGR which promote the exchange of bound GDP for free GTP. Regulated by GTPase activating proteins (GAPs) which increase the GTP hydrolysis activity. Inhibited by GDP dissociation inhibitors (GDIs). The small GTPases Rab are key regulators of intracellular membrane trafficking, from the formation of transport vesicles to their fusion with membranes. Rabs cycle between an inactive GDP-bound form and an active GTP-bound form that is able to recruit to membranes different sets of downstream effectors directly responsible for vesicle formation, movement, tethering and fusion. Acts as an organizer for autophagosome biogenesis in a GTP-dependent manner. Involved in retinal homeostasis by autophagy regulation. The protein is Ras-related protein Rab-37 of Mus musculus (Mouse).